The chain runs to 600 residues: DNA mismatch repair protein MutL (600 aa).

It belongs to the DNA mismatch repair MutL/HexB family.

This protein is involved in the repair of mismatches in DNA. It is required for dam-dependent methyl-directed DNA mismatch repair. May act as a 'molecular matchmaker', a protein that promotes the formation of a stable complex between two or more DNA-binding proteins in an ATP-dependent manner without itself being part of a final effector complex. In Sinorhizobium fredii (strain NBRC 101917 / NGR234), this protein is DNA mismatch repair protein MutL.